A 256-amino-acid polypeptide reads, in one-letter code: 5'-nucleotidase SurE (256 aa).

Residues Asp-13, Asp-14, Ser-44, and Asn-101 each contribute to the a divalent metal cation site.

The protein belongs to the SurE nucleotidase family. A divalent metal cation serves as cofactor.

Its subcellular location is the cytoplasm. It carries out the reaction a ribonucleoside 5'-phosphate + H2O = a ribonucleoside + phosphate. Nucleotidase that shows phosphatase activity on nucleoside 5'-monophosphates. The polypeptide is 5'-nucleotidase SurE (Porphyromonas gingivalis (strain ATCC 33277 / DSM 20709 / CIP 103683 / JCM 12257 / NCTC 11834 / 2561)).